The following is a 644-amino-acid chain: Chaperone protein HtpG (644 aa).

The interval 1–352 is a; substrate-binding; that stretch reads MNARVEQLEF…AQDMSLNVSR (352 aa). The interval 353-566 is b; sequence EILQQDRQIK…AFGITPALAR (214 aa). Residues 567–644 form a c region; that stretch reads LYRASGQDIP…ILADRLARTL (78 aa).

It belongs to the heat shock protein 90 family. As to quaternary structure, homodimer.

The protein localises to the cytoplasm. Its function is as follows. Molecular chaperone. Has ATPase activity. This chain is Chaperone protein HtpG, found in Mycobacterium avium (strain 104).